Consider the following 696-residue polypeptide: Elongation factor G (696 aa).

The region spanning 8-290 (ERYRNIGISA…KVIELMPAPT (283 aa)) is the tr-type G domain. Residues 17 to 24 (AHIDAGKT), 88 to 92 (DTPGH), and 142 to 145 (NKMD) contribute to the GTP site.

Belongs to the TRAFAC class translation factor GTPase superfamily. Classic translation factor GTPase family. EF-G/EF-2 subfamily.

It is found in the cytoplasm. Catalyzes the GTP-dependent ribosomal translocation step during translation elongation. During this step, the ribosome changes from the pre-translocational (PRE) to the post-translocational (POST) state as the newly formed A-site-bound peptidyl-tRNA and P-site-bound deacylated tRNA move to the P and E sites, respectively. Catalyzes the coordinated movement of the two tRNA molecules, the mRNA and conformational changes in the ribosome. This Thiobacillus denitrificans (strain ATCC 25259 / T1) protein is Elongation factor G.